We begin with the raw amino-acid sequence, 330 residues long: Taste receptor type 2 member 117 (330 aa).

At 1–16 the chain is on the extracellular side; it reads MKHFWKILSVISQSTL. Residues 17-37 traverse the membrane as a helical segment; the sequence is SVILIVELVIGIIGNGFMVLV. Residues 38–53 lie on the Cytoplasmic side of the membrane; that stretch reads HCMDWVKKKKMSLVNQ. The helical transmembrane segment at 54 to 74 threads the bilayer; the sequence is ILTALSISRIFQLCLLFISLV. Over 75–95 the chain is Extracellular; it reads INFSYTDLTTSSRMIQVMYNA. A glycan (N-linked (GlcNAc...) asparagine) is linked at Asn76. Residues 96–116 form a helical membrane-spanning segment; the sequence is WILANHFSIWIATCLTVLYFL. Residues 117 to 135 are Cytoplasmic-facing; the sequence is KIANFSNSFFLYLKWRVEK. The chain crosses the membrane as a helical span at residues 136-156; the sequence is VVSVTLLVSLLLLILNILLTN. Topologically, residues 157-190 are extracellular; it reads LETDMWTNEYQRNISCSFSSHYYAKCHRQVLRLH. An N-linked (GlcNAc...) asparagine glycan is attached at Asn169. Residues 191-211 traverse the membrane as a helical segment; sequence IIFLSVPVVLSLSTFLLLIFS. The Cytoplasmic segment spans residues 212-239; it reads LWTHHKRMQQHVQGGRDARTTAHFKALQ. A helical transmembrane segment spans residues 240–260; it reads TVIAFFLLYSIFILSVLIQIW. Topologically, residues 261-269 are extracellular; that stretch reads KYELLKKNL. Residues 270-290 traverse the membrane as a helical segment; sequence FVVFCEVVYIAFPTFHSYILI. The Cytoplasmic portion of the chain corresponds to 291–330; it reads VGDMKLRQACLPLCIIAAEIQTTLCRNFRSLKYFRLCCIF.

The protein belongs to the G-protein coupled receptor T2R family.

Its subcellular location is the membrane. Its function is as follows. Putative taste receptor which may play a role in the perception of bitterness. The sequence is that of Taste receptor type 2 member 117 from Mus musculus (Mouse).